The sequence spans 102 residues: uncharacterized protein (102 aa).

A signal peptide spans 1–41 (MLFLDSYSLLIQFQRFKNWESPRRFSSSFPLLLFVFKPIFA).

This is an uncharacterized protein from Saccharomyces cerevisiae (strain ATCC 204508 / S288c) (Baker's yeast).